The chain runs to 227 residues: Ribonuclease 3 (227 aa).

Positions 4–126 (LDRLERKIGY…IIGAMSLDQG (123 aa)) constitute an RNase III domain. Position 39 (Glu-39) interacts with Mg(2+). The active site involves Asp-43. Positions 112 and 115 each coordinate Mg(2+). The active site involves Glu-115. A DRBM domain is found at 153–226 (DAKTRLQEYL…AEQILKELDI (74 aa)).

It belongs to the ribonuclease III family. Homodimer. Mg(2+) serves as cofactor.

Its subcellular location is the cytoplasm. The catalysed reaction is Endonucleolytic cleavage to 5'-phosphomonoester.. Its function is as follows. Digests double-stranded RNA. Involved in the processing of primary rRNA transcript to yield the immediate precursors to the large and small rRNAs (23S and 16S). Processes some mRNAs, and tRNAs when they are encoded in the rRNA operon. Processes pre-crRNA and tracrRNA of type II CRISPR loci if present in the organism. This chain is Ribonuclease 3, found in Haemophilus influenzae (strain 86-028NP).